The sequence spans 809 residues: Leucine--tRNA ligase (809 aa).

The 'HIGH' region signature appears at 40–50; the sequence is PYPSGRIHMGH. The 'KMSKS' region motif lies at 579-583; sequence KMSKS. ATP is bound at residue Lys582.

This sequence belongs to the class-I aminoacyl-tRNA synthetase family.

The protein resides in the cytoplasm. The enzyme catalyses tRNA(Leu) + L-leucine + ATP = L-leucyl-tRNA(Leu) + AMP + diphosphate. This chain is Leucine--tRNA ligase, found in Campylobacter lari (strain RM2100 / D67 / ATCC BAA-1060).